The sequence spans 439 residues: Large ribosomal subunit protein mL65 (439 aa).

It belongs to the mitochondrion-specific ribosomal protein mL65 family. In terms of assembly, component of the mitochondrial large ribosomal subunit (mt-LSU). Mature mammalian 55S mitochondrial ribosomes consist of a small (28S) and a large (39S) subunit. The 28S small subunit contains a 12S ribosomal RNA (12S mt-rRNA) and 30 different proteins. The 39S large subunit contains a 16S rRNA (16S mt-rRNA), a copy of mitochondrial valine transfer RNA (mt-tRNA(Val)), which plays an integral structural role, and 52 different proteins. mL65 forms a heterodimer with mL37. Heart, skeletal muscle, kidney and liver. Lower expression in placenta and peripheral blood leukocytes.

The protein localises to the mitochondrion. In Homo sapiens (Human), this protein is Large ribosomal subunit protein mL65 (MRPS30).